The chain runs to 302 residues: tRNA dimethylallyltransferase (302 aa).

9–16 is a binding site for ATP; it reads GATATGKS. Position 11-16 (11-16) interacts with substrate; sequence TATGKS. The tract at residues 34 to 37 is interaction with substrate tRNA; sequence DSRQ.

It belongs to the IPP transferase family. As to quaternary structure, monomer. Requires Mg(2+) as cofactor.

It catalyses the reaction adenosine(37) in tRNA + dimethylallyl diphosphate = N(6)-dimethylallyladenosine(37) in tRNA + diphosphate. In terms of biological role, catalyzes the transfer of a dimethylallyl group onto the adenine at position 37 in tRNAs that read codons beginning with uridine, leading to the formation of N6-(dimethylallyl)adenosine (i(6)A). This is tRNA dimethylallyltransferase from Nostoc punctiforme (strain ATCC 29133 / PCC 73102).